Here is a 160-residue protein sequence, read N- to C-terminus: MSLTLFAVYFVACACAGATGAIFSPGAWYDSLKKPSWVPPNWLFPVAWSTLYILMSISAARVSGLAMENELAVLGLAFWAVQIAVNTLWTPIFFGLHRLAGGMLVLVLLWLSVFATCVLFWSVDWLSGLMFVPYVIWVTVAGALNFSVWRLNPGEKPITL.

5 consecutive transmembrane segments (helical) span residues 3-23 (LTLFAVYFVACACAGATGAIF), 37-57 (WVPPNWLFPVAWSTLYILMSI), 76-96 (LAFWAVQIAVNTLWTPIFFGL), 101-121 (GGMLVLVLLWLSVFATCVLFW), and 129-149 (LMFVPYVIWVTVAGALNFSVW).

This sequence belongs to the TspO/BZRP family.

The protein localises to the cell inner membrane. Its pathway is carotenoid biosynthesis; spheroidene biosynthesis. This chain is Protein CrtK (crtK), found in Rhodobacter capsulatus (strain ATCC BAA-309 / NBRC 16581 / SB1003).